Consider the following 201-residue polypeptide: FMN reductase (NADH) RutF 1 (201 aa).

Positions 167-195 (PRAPRSGSAPAEPARAARAVGARPAEGPA) are enriched in low complexity. The disordered stretch occupies residues 167–201 (PRAPRSGSAPAEPARAARAVGARPAEGPALALRSA).

This sequence belongs to the non-flavoprotein flavin reductase family. RutF subfamily.

The enzyme catalyses FMNH2 + NAD(+) = FMN + NADH + 2 H(+). Its function is as follows. Catalyzes the reduction of FMN to FMNH2 which is used to reduce pyrimidine by RutA via the Rut pathway. The polypeptide is FMN reductase (NADH) RutF 1 (Methylorubrum extorquens (strain CM4 / NCIMB 13688) (Methylobacterium extorquens)).